A 429-amino-acid chain; its full sequence is Enolase (429 aa).

Glutamine 168 contributes to the (2R)-2-phosphoglycerate binding site. Glutamate 210 functions as the Proton donor in the catalytic mechanism. Aspartate 247, glutamate 288, and aspartate 315 together coordinate Mg(2+). Residues lysine 340, arginine 369, serine 370, and lysine 391 each coordinate (2R)-2-phosphoglycerate. Lysine 340 acts as the Proton acceptor in catalysis.

It belongs to the enolase family. The cofactor is Mg(2+).

The protein resides in the cytoplasm. The protein localises to the secreted. It is found in the cell surface. The catalysed reaction is (2R)-2-phosphoglycerate = phosphoenolpyruvate + H2O. Its pathway is carbohydrate degradation; glycolysis; pyruvate from D-glyceraldehyde 3-phosphate: step 4/5. Functionally, catalyzes the reversible conversion of 2-phosphoglycerate (2-PG) into phosphoenolpyruvate (PEP). It is essential for the degradation of carbohydrates via glycolysis. The polypeptide is Enolase (Nostoc sp. (strain PCC 7120 / SAG 25.82 / UTEX 2576)).